The following is a 484-amino-acid chain: Protein LAZ1 homolog 1 (484 aa).

The N-terminal stretch at 1 to 19 is a signal peptide; the sequence is MEWRGILCSLLFIVSVGES. 6 helical membrane-spanning segments follow: residues 42–62, 76–96, 190–210, 219–239, 264–284, and 299–319; these read PILS…YLIF, FLIG…LSLV, MILK…GVYG, GYPY…YCLV, IVFL…MGLV, and YIIC…FPAA. The segment at 344 to 364 is disordered; that stretch reads PDPEEVKDSERTTRTRYGRHD. Residues 347–364 show a composition bias toward basic and acidic residues; it reads EEVKDSERTTRTRYGRHD. Residues 406-428 are a coiled coil; that stretch reads IAKINRTFHQISENVKRFEQQKK. The tract at residues 459 to 484 is disordered; sequence VSDSGLGSTNRHHQSRVSGLWTRMRR.

It belongs to the TMEM184 family.

It is found in the membrane. The polypeptide is Protein LAZ1 homolog 1 (Arabidopsis thaliana (Mouse-ear cress)).